The following is a 368-amino-acid chain: tRNA-specific 2-thiouridylase MnmA (368 aa).

ATP-binding positions include 11–18 and Met37; that span reads GMSGGVDS. Positions 97 to 99 are interaction with target base in tRNA; sequence NPD. Cys102 functions as the Nucleophile in the catalytic mechanism. Cys102 and Cys199 are joined by a disulfide. An ATP-binding site is contributed by Gly127. An interaction with tRNA region spans residues 149–151; the sequence is KDQ. Catalysis depends on Cys199, which acts as the Cysteine persulfide intermediate. Residues 311–312 are interaction with tRNA; the sequence is RY.

It belongs to the MnmA/TRMU family. In terms of assembly, interacts with TusE.

The protein localises to the cytoplasm. It catalyses the reaction S-sulfanyl-L-cysteinyl-[protein] + uridine(34) in tRNA + AH2 + ATP = 2-thiouridine(34) in tRNA + L-cysteinyl-[protein] + A + AMP + diphosphate + H(+). Functionally, catalyzes the 2-thiolation of uridine at the wobble position (U34) of tRNA(Lys), tRNA(Glu) and tRNA(Gln), leading to the formation of s(2)U34, the first step of tRNA-mnm(5)s(2)U34 synthesis. Sulfur is provided by IscS, via a sulfur-relay system. Binds ATP and its substrate tRNAs. The protein is tRNA-specific 2-thiouridylase MnmA of Shigella boydii serotype 18 (strain CDC 3083-94 / BS512).